Reading from the N-terminus, the 249-residue chain is tRNA pseudouridine synthase A (249 aa).

Asp53 (nucleophile) is an active-site residue. Tyr111 contacts substrate.

This sequence belongs to the tRNA pseudouridine synthase TruA family. As to quaternary structure, homodimer.

It catalyses the reaction uridine(38/39/40) in tRNA = pseudouridine(38/39/40) in tRNA. Functionally, formation of pseudouridine at positions 38, 39 and 40 in the anticodon stem and loop of transfer RNAs. This Streptococcus equi subsp. zooepidemicus (strain MGCS10565) protein is tRNA pseudouridine synthase A.